Consider the following 126-residue polypeptide: SH2 domain-containing protein 1A (126 aa).

Positions 6-104 (VYHGKISRET…VTPLQYPVEK (99 aa)) constitute an SH2 domain. An interaction with FYN SH3 domain region spans residues 67–92 (ETAPGVHKRFFRKVKNLISAFQKPDQ). N6-acetyllysine is present on Lys-89. The segment at 100–126 (YPVEKSSGRGPQAPTGRRDSDICLNAP) is disordered.

Interacts with CD84, CD244, LY9, SLAMF1 and FYN. Interacts with NTRK1, NTRK2 and NTRK3. As to expression, T-cells.

The protein localises to the cytoplasm. In terms of biological role, cytoplasmic adapter regulating receptors of the signaling lymphocytic activation molecule (SLAM) family such as SLAMF1, CD244, LY9, CD84, SLAMF6 and SLAMF7. In SLAM signaling seems to cooperate with SH2D1B/EAT-2. Initially it has been proposed that association with SLAMF1 prevents SLAMF1 binding to inhibitory effectors including INPP5D/SHIP1 and PTPN11/SHP-2. However, by simultaneous interactions, recruits FYN which subsequently phosphorylates and activates SLAMF1. Positively regulates CD244/2B4- and CD84-mediated natural killer (NK) cell functions. Can also promote CD48-, SLAMF6 -, LY9-, and SLAMF7-mediated NK cell activation. In the context of NK cell-mediated cytotoxicity enhances conjugate formation with target cells. May also regulate the activity of the neurotrophin receptors NTRK1, NTRK2 and NTRK3. This Mus musculus (Mouse) protein is SH2 domain-containing protein 1A (Sh2d1a).